An 85-amino-acid chain; its full sequence is Progonadoliberin-2 (85 aa).

Positions 1 to 23 are cleaved as a signal peptide; that stretch reads MCVSRLVLLFGLLLCVGAQLSNA. Q24 bears the Pyrrolidone carboxylic acid mark. Glycine amide is present on G33.

Belongs to the GnRH family.

It is found in the secreted. In terms of biological role, stimulates the secretion of gonadotropins. This is Progonadoliberin-2 (gnrh2) from Dicentrarchus labrax (European seabass).